The following is a 155-amino-acid chain: Putative pre-16S rRNA nuclease (155 aa).

Belongs to the YqgF nuclease family.

The protein localises to the cytoplasm. Could be a nuclease involved in processing of the 5'-end of pre-16S rRNA. This is Putative pre-16S rRNA nuclease from Xanthomonas axonopodis pv. citri (strain 306).